The sequence spans 206 residues: RNA pyrophosphohydrolase (206 aa).

In terms of domain architecture, Nudix hydrolase spans 6-150 (GYRPNVGIVI…KRDVYRKVMK (145 aa)). Residues 38 to 59 (GGINEGENIETAMYRELYEEVG) carry the Nudix box motif. Basic and acidic residues predominate over residues 162–191 (KPETVEKPRVERTEKRDFQKRDNQKREFRK). The interval 162-206 (KPETVEKPRVERTEKRDFQKRDNQKREFRKSARMWNNSHQKGKAQ) is disordered.

Belongs to the Nudix hydrolase family. RppH subfamily. A divalent metal cation serves as cofactor.

Functionally, accelerates the degradation of transcripts by removing pyrophosphate from the 5'-end of triphosphorylated RNA, leading to a more labile monophosphorylated state that can stimulate subsequent ribonuclease cleavage. The chain is RNA pyrophosphohydrolase from Actinobacillus pleuropneumoniae serotype 7 (strain AP76).